Reading from the N-terminus, the 178-residue chain is Ribosome maturation factor RimP (178 aa).

It belongs to the RimP family.

The protein localises to the cytoplasm. Functionally, required for maturation of 30S ribosomal subunits. The chain is Ribosome maturation factor RimP from Streptococcus pyogenes serotype M5 (strain Manfredo).